The following is a 343-amino-acid chain: UDP-3-O-(3-hydroxymyristoyl)glucosamine N-acyltransferase (343 aa).

H239 functions as the Proton acceptor in the catalytic mechanism.

The protein belongs to the transferase hexapeptide repeat family. LpxD subfamily. In terms of assembly, homotrimer.

The enzyme catalyses a UDP-3-O-[(3R)-3-hydroxyacyl]-alpha-D-glucosamine + a (3R)-hydroxyacyl-[ACP] = a UDP-2-N,3-O-bis[(3R)-3-hydroxyacyl]-alpha-D-glucosamine + holo-[ACP] + H(+). It carries out the reaction UDP-3-O-[(3R)-3-hydroxytetradecanoyl]-alpha-D-glucosamine + (3R)-hydroxytetradecanoyl-[ACP] = UDP-2-N,3-O-bis[(3R)-3-hydroxytetradecanoyl]-alpha-D-glucosamine + holo-[ACP] + H(+). The protein operates within glycolipid biosynthesis; lipid IV(A) biosynthesis; lipid IV(A) from (3R)-3-hydroxytetradecanoyl-[acyl-carrier-protein] and UDP-N-acetyl-alpha-D-glucosamine: step 3/6. Catalyzes the N-acylation of UDP-3-O-(hydroxytetradecanoyl)glucosamine using 3-hydroxytetradecanoyl-ACP as the acyl donor. Is involved in the biosynthesis of lipid A, a phosphorylated glycolipid that anchors the lipopolysaccharide to the outer membrane of the cell. The sequence is that of UDP-3-O-(3-hydroxymyristoyl)glucosamine N-acyltransferase from Blochmanniella pennsylvanica (strain BPEN).